Consider the following 424-residue polypeptide: GTPase Obg (424 aa).

The 160-residue stretch at 1–160 (MFDRVEINIK…YDLILELKLI (160 aa)) folds into the Obg domain. Residues 161–328 (ADVAIIGYPN…LLAKVAEKLD (168 aa)) enclose the OBG-type G domain. Residues 167–174 (GYPNVGKS), 192–196 (FTTLS), 213–216 (EVPG), 280–283 (NKID), and 309–311 (SAL) each bind GTP. Residues serine 174 and threonine 194 each coordinate Mg(2+). Positions 349–424 (PAPKGKMGFR…IITGRMEWYL (76 aa)) constitute an OCT domain.

The protein belongs to the TRAFAC class OBG-HflX-like GTPase superfamily. OBG GTPase family. As to quaternary structure, monomer. Requires Mg(2+) as cofactor.

The protein localises to the cytoplasm. In terms of biological role, an essential GTPase which binds GTP, GDP and possibly (p)ppGpp with moderate affinity, with high nucleotide exchange rates and a fairly low GTP hydrolysis rate. Plays a role in control of the cell cycle, stress response, ribosome biogenesis and in those bacteria that undergo differentiation, in morphogenesis control. The chain is GTPase Obg from Dehalococcoides mccartyi (strain ATCC BAA-2100 / JCM 16839 / KCTC 5957 / BAV1).